The chain runs to 509 residues: Citrate synthase 3, peroxisomal (509 aa).

Catalysis depends on residues His319, His358, and Asp414. The tract at residues 485 to 509 (SKESDKLGQVATSNASRRRLAGSSV) is disordered. The span at 500–509 (SRRRLAGSSV) shows a compositional bias: basic residues.

The protein belongs to the citrate synthase family. As to expression, widely expressed. Expressed throughout the shoot. Expressed in flower, silique, stem, cauline leaf, young leaf, mature leaf and senescent leaf.

The protein localises to the peroxisome. It carries out the reaction oxaloacetate + acetyl-CoA + H2O = citrate + CoA + H(+). Its pathway is carbohydrate metabolism; tricarboxylic acid cycle; isocitrate from oxaloacetate: step 1/2. Functionally, peroxisomal citrate synthase required for the fatty acid respiration in seedlings, citrate being exported from peroxisomes into mitochondria during respiration of triacylglycerol (TAG). Indeed, complete respiration requires the transfer of carbon in the form of citrate from the peroxisome to the mitochondria. This Arabidopsis thaliana (Mouse-ear cress) protein is Citrate synthase 3, peroxisomal (CSY3).